Reading from the N-terminus, the 232-residue chain is Ribonuclease 3 (232 aa).

The 130-residue stretch at 5–134 folds into the RNase III domain; that stretch reads ENLLFDRFGL…FLGALLLDKG (130 aa). E47 lines the Mg(2+) pocket. D51 is a catalytic residue. Mg(2+)-binding residues include D120 and E123. E123 is an active-site residue. Positions 160–229 constitute a DRBM domain; that stretch reads DYKTKLQELL…AKNAFEKENH (70 aa).

Belongs to the ribonuclease III family. As to quaternary structure, homodimer. Requires Mg(2+) as cofactor.

Its subcellular location is the cytoplasm. It catalyses the reaction Endonucleolytic cleavage to 5'-phosphomonoester.. Functionally, digests double-stranded RNA. Involved in the processing of primary rRNA transcript to yield the immediate precursors to the large and small rRNAs (23S and 16S). Processes some mRNAs, and tRNAs when they are encoded in the rRNA operon. Processes pre-crRNA and tracrRNA of type II CRISPR loci if present in the organism. This chain is Ribonuclease 3, found in Streptococcus gordonii (strain Challis / ATCC 35105 / BCRC 15272 / CH1 / DL1 / V288).